Here is a 499-residue protein sequence, read N- to C-terminus: Aspartyl/glutamyl-tRNA(Asn/Gln) amidotransferase subunit B (499 aa).

Belongs to the GatB/GatE family. GatB subfamily. Heterotrimer of A, B and C subunits.

The catalysed reaction is L-glutamyl-tRNA(Gln) + L-glutamine + ATP + H2O = L-glutaminyl-tRNA(Gln) + L-glutamate + ADP + phosphate + H(+). It carries out the reaction L-aspartyl-tRNA(Asn) + L-glutamine + ATP + H2O = L-asparaginyl-tRNA(Asn) + L-glutamate + ADP + phosphate + 2 H(+). Its function is as follows. Allows the formation of correctly charged Asn-tRNA(Asn) or Gln-tRNA(Gln) through the transamidation of misacylated Asp-tRNA(Asn) or Glu-tRNA(Gln) in organisms which lack either or both of asparaginyl-tRNA or glutaminyl-tRNA synthetases. The reaction takes place in the presence of glutamine and ATP through an activated phospho-Asp-tRNA(Asn) or phospho-Glu-tRNA(Gln). In Leifsonia xyli subsp. xyli (strain CTCB07), this protein is Aspartyl/glutamyl-tRNA(Asn/Gln) amidotransferase subunit B.